We begin with the raw amino-acid sequence, 239 residues long: MRVFVILPAAGLGTRMAAGSHTPHQPKQFLELEGVPVLIHTLRAFAAVPAVSAMIVAVRPNEIERVQAQVNEYGFQDKVRVVAGGDSRQQSVSRALATVECDASDIVLVHDAVRPLIEPAVIARTIEAVEKSGAAIVGLPAVDTIKQVERTAAGAIITATIPREYIVQAQTPQGFRCELLRRAFAEAEADGFTGTDEASLVERAGAQVTVVPGSPSNMKITQPGDLELAAFYLRQRSSR.

The protein belongs to the IspD/TarI cytidylyltransferase family. IspD subfamily.

It carries out the reaction 2-C-methyl-D-erythritol 4-phosphate + CTP + H(+) = 4-CDP-2-C-methyl-D-erythritol + diphosphate. It participates in isoprenoid biosynthesis; isopentenyl diphosphate biosynthesis via DXP pathway; isopentenyl diphosphate from 1-deoxy-D-xylulose 5-phosphate: step 2/6. In terms of biological role, catalyzes the formation of 4-diphosphocytidyl-2-C-methyl-D-erythritol from CTP and 2-C-methyl-D-erythritol 4-phosphate (MEP). In Acidobacterium capsulatum (strain ATCC 51196 / DSM 11244 / BCRC 80197 / JCM 7670 / NBRC 15755 / NCIMB 13165 / 161), this protein is 2-C-methyl-D-erythritol 4-phosphate cytidylyltransferase.